The following is a 349-amino-acid chain: Phospho-N-acetylmuramoyl-pentapeptide-transferase (349 aa).

A run of 10 helical transmembrane segments spans residues 13–33 (LFFSLALTGMTTLVLTVSLGV), 69–89 (GGGVLLFISLIASLLVWLPWG), 91–111 (FSTWFFIILLTCYAGLGWYDD), 129–149 (FMVQIAIAAFTLIALPYIYGS), 165–185 (LSLPFWLGKVFCLGLALVAII), 197–217 (LDGLAAGTMSFAALGFIFVAL), 228–248 (VAYVLAALVGACIGFLWYNGF), 252–272 (LFMGDTGSLLLGGLLGSCAVM), 278–298 (ILVVIGGVFVAEAGSVILQVL), and 327–347 (IVMRFWIFSFVCAGLGIAAVL).

This sequence belongs to the glycosyltransferase 4 family. MraY subfamily. Mg(2+) is required as a cofactor.

Its subcellular location is the cell inner membrane. It carries out the reaction UDP-N-acetyl-alpha-D-muramoyl-L-alanyl-gamma-D-glutamyl-meso-2,6-diaminopimeloyl-D-alanyl-D-alanine + di-trans,octa-cis-undecaprenyl phosphate = di-trans,octa-cis-undecaprenyl diphospho-N-acetyl-alpha-D-muramoyl-L-alanyl-D-glutamyl-meso-2,6-diaminopimeloyl-D-alanyl-D-alanine + UMP. It functions in the pathway cell wall biogenesis; peptidoglycan biosynthesis. Catalyzes the initial step of the lipid cycle reactions in the biosynthesis of the cell wall peptidoglycan: transfers peptidoglycan precursor phospho-MurNAc-pentapeptide from UDP-MurNAc-pentapeptide onto the lipid carrier undecaprenyl phosphate, yielding undecaprenyl-pyrophosphoryl-MurNAc-pentapeptide, known as lipid I. The sequence is that of Phospho-N-acetylmuramoyl-pentapeptide-transferase from Chlamydia pneumoniae (Chlamydophila pneumoniae).